The chain runs to 346 residues: Formimidoylglutamase (346 aa).

Positions 145, 180, 182, 184, 271, and 273 each coordinate Mn(2+).

Belongs to the arginase family. Mn(2+) serves as cofactor.

The enzyme catalyses N-formimidoyl-L-glutamate + H2O = formamide + L-glutamate. It functions in the pathway amino-acid degradation; L-histidine degradation into L-glutamate; L-glutamate from N-formimidoyl-L-glutamate (hydrolase route): step 1/1. Functionally, catalyzes the conversion of N-formimidoyl-L-glutamate to L-glutamate and formamide. This is Formimidoylglutamase from Psychrobacter cryohalolentis (strain ATCC BAA-1226 / DSM 17306 / VKM B-2378 / K5).